Reading from the N-terminus, the 208-residue chain is ATP phosphoribosyltransferase (208 aa).

It belongs to the ATP phosphoribosyltransferase family. Short subfamily. As to quaternary structure, heteromultimer composed of HisG and HisZ subunits.

It localises to the cytoplasm. It carries out the reaction 1-(5-phospho-beta-D-ribosyl)-ATP + diphosphate = 5-phospho-alpha-D-ribose 1-diphosphate + ATP. The protein operates within amino-acid biosynthesis; L-histidine biosynthesis; L-histidine from 5-phospho-alpha-D-ribose 1-diphosphate: step 1/9. In terms of biological role, catalyzes the condensation of ATP and 5-phosphoribose 1-diphosphate to form N'-(5'-phosphoribosyl)-ATP (PR-ATP). Has a crucial role in the pathway because the rate of histidine biosynthesis seems to be controlled primarily by regulation of HisG enzymatic activity. The sequence is that of ATP phosphoribosyltransferase from Thermotoga neapolitana (strain ATCC 49049 / DSM 4359 / NBRC 107923 / NS-E).